Here is a 257-residue protein sequence, read N- to C-terminus: Phosphonates import ATP-binding protein PhnC (257 aa).

An ABC transporter domain is found at 4–248 (IEFKNVSKVY…IFSEIYGRTI (245 aa)). 37–44 (GLSGAGKS) provides a ligand contact to ATP.

Belongs to the ABC transporter superfamily. Phosphonates importer (TC 3.A.1.9.1) family. In terms of assembly, the complex is composed of two ATP-binding proteins (PhnC), two transmembrane proteins (PhnE) and a solute-binding protein (PhnD).

The protein localises to the cell membrane. It carries out the reaction phosphonate(out) + ATP + H2O = phosphonate(in) + ADP + phosphate + H(+). Functionally, part of the ABC transporter complex PhnCDE involved in phosphonates import. Responsible for energy coupling to the transport system. The sequence is that of Phosphonates import ATP-binding protein PhnC from Staphylococcus aureus (strain bovine RF122 / ET3-1).